A 255-amino-acid chain; its full sequence is Ribonuclease HII (255 aa).

Residues 72–255 form the RNase H type-2 domain; it reads RLIAGIDEVG…RTFAPIKDMI (184 aa). Positions 78, 79, and 170 each coordinate a divalent metal cation.

This sequence belongs to the RNase HII family. Mn(2+) serves as cofactor. Requires Mg(2+) as cofactor.

It localises to the cytoplasm. The enzyme catalyses Endonucleolytic cleavage to 5'-phosphomonoester.. Endonuclease that specifically degrades the RNA of RNA-DNA hybrids. The sequence is that of Ribonuclease HII from Enterococcus faecalis (strain ATCC 700802 / V583).